The following is a 147-amino-acid chain: Myoglobin (147 aa).

The region spanning 2–141 (ADFDMVLKCW…IIADMEADYK (140 aa)) is the Globin domain. His-60 serves as a coordination point for nitrite. His-60 is an O2 binding site. His-89 lines the heme b pocket.

The protein belongs to the globin family. As to quaternary structure, monomeric.

It is found in the cytoplasm. The protein localises to the sarcoplasm. The enzyme catalyses Fe(III)-heme b-[protein] + nitric oxide + H2O = Fe(II)-heme b-[protein] + nitrite + 2 H(+). It carries out the reaction H2O2 + AH2 = A + 2 H2O. In terms of biological role, monomeric heme protein which primary function is to store oxygen and facilitate its diffusion within muscle tissues. Reversibly binds oxygen through a pentacoordinated heme iron and enables its timely and efficient release as needed during periods of heightened demand. Depending on the oxidative conditions of tissues and cells, and in addition to its ability to bind oxygen, it also has a nitrite reductase activity whereby it regulates the production of bioactive nitric oxide. Under stress conditions, like hypoxia and anoxia, it also protects cells against reactive oxygen species thanks to its pseudoperoxidase activity. The polypeptide is Myoglobin (mb) (Gobionotothen gibberifrons (Humped rockcod)).